A 33-amino-acid polypeptide reads, in one-letter code: MLFTVAWASLAAMFSFSIAMVVWGRNGDGTLNF.

Residues 2–22 traverse the membrane as a helical segment; the sequence is LFTVAWASLAAMFSFSIAMVV.

This sequence belongs to the PetN family. The 4 large subunits of the cytochrome b6-f complex are cytochrome b6, subunit IV (17 kDa polypeptide, PetD), cytochrome f and the Rieske protein, while the 4 small subunits are PetG, PetL, PetM and PetN. The complex functions as a dimer.

The protein resides in the cellular thylakoid membrane. In terms of biological role, component of the cytochrome b6-f complex, which mediates electron transfer between photosystem II (PSII) and photosystem I (PSI), cyclic electron flow around PSI, and state transitions. This chain is Cytochrome b6-f complex subunit 8, found in Parasynechococcus marenigrum (strain WH8102).